We begin with the raw amino-acid sequence, 644 residues long: 3D-(3,5/4)-trihydroxycyclohexane-1,2-dione hydrolase (644 aa).

Thiamine diphosphate is bound at residue Glu65. The tract at residues 442–522 (SLPGDLQRMW…INVLLFDNSG (81 aa)) is thiamine pyrophosphate binding. The Mg(2+) site is built by Asp493 and Asn520.

The protein belongs to the TPP enzyme family. Mg(2+) is required as a cofactor. It depends on thiamine diphosphate as a cofactor.

The enzyme catalyses 3D-3,5/4-trihydroxycyclohexane-1,2-dione + H2O = 5-deoxy-D-glucuronate + H(+). Its pathway is polyol metabolism; myo-inositol degradation into acetyl-CoA; acetyl-CoA from myo-inositol: step 3/7. Involved in the cleavage of the C1-C2 bond of 3D-(3,5/4)-trihydroxycyclohexane-1,2-dione (THcHDO) to yield 5-deoxy-glucuronate (5DG). This Bacillus anthracis (strain A0248) protein is 3D-(3,5/4)-trihydroxycyclohexane-1,2-dione hydrolase.